A 478-amino-acid polypeptide reads, in one-letter code: tRNA-2-methylthio-N(6)-dimethylallyladenosine synthase (478 aa).

One can recognise an MTTase N-terminal domain in the interval 39-157 (KLVFTQTFGC…FPQLLTESIN (119 aa)). Residues cysteine 48, cysteine 84, cysteine 118, cysteine 194, cysteine 198, and cysteine 201 each coordinate [4Fe-4S] cluster. One can recognise a Radical SAM core domain in the interval 180 to 410 (RKFELKAFVN…LEAVNRISAE (231 aa)). The 68-residue stretch at 410–477 (EINDGYKDRI…TFSLNGILVN (68 aa)) folds into the TRAM domain.

It belongs to the methylthiotransferase family. MiaB subfamily. In terms of assembly, monomer. It depends on [4Fe-4S] cluster as a cofactor.

Its subcellular location is the cytoplasm. The catalysed reaction is N(6)-dimethylallyladenosine(37) in tRNA + (sulfur carrier)-SH + AH2 + 2 S-adenosyl-L-methionine = 2-methylsulfanyl-N(6)-dimethylallyladenosine(37) in tRNA + (sulfur carrier)-H + 5'-deoxyadenosine + L-methionine + A + S-adenosyl-L-homocysteine + 2 H(+). Functionally, catalyzes the methylthiolation of N6-(dimethylallyl)adenosine (i(6)A), leading to the formation of 2-methylthio-N6-(dimethylallyl)adenosine (ms(2)i(6)A) at position 37 in tRNAs that read codons beginning with uridine. This Clostridioides difficile (strain 630) (Peptoclostridium difficile) protein is tRNA-2-methylthio-N(6)-dimethylallyladenosine synthase.